The sequence spans 451 residues: Tubulin alpha-3 chain (451 aa).

GTP is bound at residue Gln11. Lys40 carries the N6-acetyllysine modification. Positions 71, 140, 144, 145, 179, 206, and 228 each coordinate GTP. A Mg(2+)-binding site is contributed by Glu71. Glu254 is a catalytic residue.

Belongs to the tubulin family. In terms of assembly, dimer of alpha and beta chains. A typical microtubule is a hollow water-filled tube with an outer diameter of 25 nm and an inner diameter of 15 nM. Alpha-beta heterodimers associate head-to-tail to form protofilaments running lengthwise along the microtubule wall with the beta-tubulin subunit facing the microtubule plus end conferring a structural polarity. Microtubules usually have 13 protofilaments but different protofilament numbers can be found in some organisms and specialized cells. It depends on Mg(2+) as a cofactor. Post-translationally, undergoes a tyrosination/detyrosination cycle, the cyclic removal and re-addition of a C-terminal tyrosine residue by the enzymes tubulin tyrosine carboxypeptidase (TTCP) and tubulin tyrosine ligase (TTL), respectively. In terms of processing, acetylation of alpha chains at Lys-40 stabilizes microtubules and affects affinity and processivity of microtubule motors. This modification has a role in multiple cellular functions, ranging from cell motility, cell cycle progression or cell differentiation to intracellular trafficking and signaling.

The protein localises to the cytoplasm. The protein resides in the cytoskeleton. The catalysed reaction is GTP + H2O = GDP + phosphate + H(+). Tubulin is the major constituent of microtubules, a cylinder consisting of laterally associated linear protofilaments composed of alpha- and beta-tubulin heterodimers. Microtubules grow by the addition of GTP-tubulin dimers to the microtubule end, where a stabilizing cap forms. Below the cap, tubulin dimers are in GDP-bound state, owing to GTPase activity of alpha-tubulin. The chain is Tubulin alpha-3 chain from Homarus americanus (American lobster).